The chain runs to 477 residues: PTS system glucose-specific EIICB component (477 aa).

Topologically, residues 1–14 (MFKNAFANLQKVGK) are cytoplasmic. The region spanning 1–388 (MFKNAFANLQ…LDLKTPGRED (388 aa)) is the PTS EIIC type-1 domain. Residues 15 to 35 (SLMLPVSVLPIAGILLGVGSA) form a helical membrane-spanning segment. Topologically, residues 36-50 (NFSWLPAVVSHVMAE) are periplasmic. A helical transmembrane segment spans residues 51 to 71 (AGGSVFANMPLIFAIGVALGF). At 72 to 79 (TNNDGVSA) the chain is on the cytoplasmic side. A helical transmembrane segment spans residues 80–100 (LAAVVAYGIMVKTMAVVAPLV). Topologically, residues 101–111 (LHLPAEEIAAK) are periplasmic. The chain crosses the membrane as a helical span at residues 112–132 (HLADTGVLGGIISGAIAAYMF). The Cytoplasmic segment spans residues 133–151 (NRFYRIKLPEYLGFFAGKR). The chain crosses the membrane as a helical span at residues 152–172 (FVPIISGLAAIFTGVVLSFVW). At 173–190 (PPIGTAIQAFSQWAAYQN) the chain is on the periplasmic side. Residues 191–211 (PVVAFGIYGFIERCLVPFGLH) form a helical membrane-spanning segment. The Cytoplasmic portion of the chain corresponds to 212-248 (HIWNVPFQMQIGEYTNAAGQVFHGDIPRYMAGDPTAG). The chain crosses the membrane as a helical span at residues 249–269 (MLSGGFLFKMYGLPAAAIAIW). Topologically, residues 270-279 (HSAKPENRAK) are periplasmic. Residues 280–300 (VGGIMISAALTSFLTGITEPI) traverse the membrane as a helical segment. Topologically, residues 301 to 309 (EFSFMFVAP) are cytoplasmic. Residues 310 to 330 (ILYIIHAILAGLAFPICILLG) traverse the membrane as a helical segment. Over 331 to 355 (MRDGTSFSHGLIDFIVLSGNSSKLW) the chain is Periplasmic. A helical transmembrane segment spans residues 356–376 (LFPIVGAGYAIVYYTVFRVLI). Residues 377-477 (KALDLKTPGR…TEMDEYIRNS (101 aa)) lie on the Cytoplasmic side of the membrane. One can recognise a PTS EIIB type-1 domain in the interval 399-477 (SEMAPALVAA…TEMDEYIRNS (79 aa)). Cys-421 acts as the Phosphocysteine intermediate; for EIIB activity in catalysis. Phosphocysteine is present on Cys-421.

It is found in the cell inner membrane. It catalyses the reaction N(pros)-phospho-L-histidyl-[protein] + D-glucose(out) = D-glucose 6-phosphate(in) + L-histidyl-[protein]. In terms of biological role, the phosphoenolpyruvate-dependent sugar phosphotransferase system (sugar PTS), a major carbohydrate active transport system, catalyzes the phosphorylation of incoming sugar substrates concomitantly with their translocation across the cell membrane. The enzyme II complex composed of PtsG and Crr is involved in glucose transport. Also functions as a chemoreceptor monitoring the environment for changes in sugar concentration. It can also phosphorylate mannose, methyl alpha-glucoside and 2-deoxy-glucose. This Salmonella typhimurium (strain LT2 / SGSC1412 / ATCC 700720) protein is PTS system glucose-specific EIICB component (ptsG).